Here is a 76-residue protein sequence, read N- to C-terminus: U7-lycotoxin-Ls1b (76 aa).

A signal peptide spans 1-22 (MKLISFTGLALLLIVSLIDVEA). The propeptide occupies 23–26 (QNEG).

Belongs to the neurotoxin 19 (CSTX) family. 07 (U7-Lctx) subfamily. In terms of processing, contains 4 disulfide bonds. Expressed by the venom gland.

Its subcellular location is the secreted. This is U7-lycotoxin-Ls1b from Lycosa singoriensis (Wolf spider).